We begin with the raw amino-acid sequence, 443 residues long: MEQLWVPSLPILGGRILPMLRHYCGFGSHHPLTWRSLQITGRKQKHNGCWIAYCLPSHNGTSISDTNGVRKDLALPDNLLRDAHILYCTSPAMGHNKEAHPETNKRVPAIVDALEKLELTSKHRGSQVLEIQDFQPASLDDIALVHSRSYITGLEKAMSRASDEGLIFIEGTGPTYATQTTFQECLLSAGAGITLVDSVVAASKLGPKPPLGFALVRPPGHHAVPEGPMGFCVFGNIAVAARYAQNQHGLKRVMIIDFDVHHGNGTCDAFYEDPDIFFLSTHQLGSYPGTGKIHQVGQGNGEGTTLNLPLPGGSGDYAMRCAFDEVIAPAAQRFKPDIILVSAGYDAHALDPLAGLQFTTGTFYMLAARIREVAAELCGGRCVFFLEGGYNLESLSSSVADTFRAFLGEPSLAARFDDPAMLYEEPTRKIREAIDKAKHLHSL.

Residues 1–65 (MEQLWVPSLP…PSHNGTSISD (65 aa)) constitute a chloroplast transit peptide. Residues 82–412 (DAHILYCTSP…FRAFLGEPSL (331 aa)) form a histone deacetylase region. Residue His-222 is the Proton donor/acceptor of the active site. Residues Asp-259, His-261, and Asp-346 each coordinate Zn(2+).

It belongs to the histone deacetylase family. Requires Zn(2+) as cofactor. As to expression, expressed in leaves. Expressed in coleoptiles, leaves, flag leaves and flowers. Expressed at low levels in roots.

Its subcellular location is the plastid. It localises to the chloroplast. The protein localises to the mitochondrion. It carries out the reaction N-acetylserotonin + H2O = serotonin + acetate. The enzyme catalyses N-acetyltyramine + H2O = tyramine + acetate. The catalysed reaction is N-acetyltryptamine + H2O = tryptamine + acetate. It catalyses the reaction melatonin + H2O = 5-methoxytryptamine + acetate. Its activity is regulated as follows. The activity of this enzyme is not inhibited by butyrate, a well-known histone deacetylase inhibitor. Its function is as follows. Involved in the regulation of melatonin biosynthesis by catalyzing the deacetylation of N-acetylserotonin to produce serotonin. N-acetylserotonin is methylated by acetylserotonin O-methyltransferase (ASMT) to produce melatonin (N-acetyl-5-methoxytryptamine). Deacetylates melatonin to produce 5-methoxytryptamine. In vitro, deacetylates N-acetyltyramine and N-acetyltryptamine to produce tyramine and tryptamine, respectively. In Oryza sativa subsp. japonica (Rice), this protein is Histone deacetylase 10, chloroplastic.